Here is a 68-residue protein sequence, read N- to C-terminus: Small integral membrane protein 45 (68 aa).

The helical transmembrane segment at 7-27 (WFVPVYLVISVLILVGFGACI) threads the bilayer.

In terms of tissue distribution, highly expressed in brain.

It localises to the nucleus. It is found in the cytoplasm. The protein resides in the membrane. In terms of biological role, plays a role in the regulation of neuron maturation. The polypeptide is Small integral membrane protein 45 (Homo sapiens (Human)).